We begin with the raw amino-acid sequence, 127 residues long: MNALYVTTVPKGYSSLSKCNHNEQDTAYRLWLCTHNHWTAPSGMRLQPLTSLGSKEMKSRWNWGSITCIICFTCVGSQLSMSSSKASNFSGPLQLYQRGIGHITNSYKRPQAPAWPCLSSGTMGRSH.

Over 1 to 65 (MNALYVTTVP…EMKSRWNWGS (65 aa)) the chain is Extracellular. Residues 66–84 (ITCIICFTCVGSQLSMSSS) form a helical membrane-spanning segment. The Cytoplasmic portion of the chain corresponds to 85 to 127 (KASNFSGPLQLYQRGIGHITNSYKRPQAPAWPCLSSGTMGRSH).

Widely expressed with higher levels in kidney and aorta.

The protein resides in the cell membrane. In terms of biological role, dual receptor for both endothelin-1 and the signal sequence of vascular endothelial growth factor A. Does not act as a receptor for angiotensin-2. Does not bind the VEGFA mature protein. May play a role in angiogenesis with a significant role in cardiovascular and neural development. In Mus musculus (Mouse), this protein is Dual endothelin-1/VEGF signal peptide receptor.